We begin with the raw amino-acid sequence, 346 residues long: Putative agmatine deiminase (346 aa).

Cys-338 serves as the catalytic Amidino-cysteine intermediate.

The protein belongs to the agmatine deiminase family.

The catalysed reaction is agmatine + H2O = N-carbamoylputrescine + NH4(+). The polypeptide is Putative agmatine deiminase (Streptomyces avermitilis (strain ATCC 31267 / DSM 46492 / JCM 5070 / NBRC 14893 / NCIMB 12804 / NRRL 8165 / MA-4680)).